Reading from the N-terminus, the 257-residue chain is tRNA (guanine-N(1)-)-methyltransferase (257 aa).

S-adenosyl-L-methionine-binding positions include Gly-112 and 136 to 141 (LGDYVL).

It belongs to the RNA methyltransferase TrmD family. Homodimer.

The protein localises to the cytoplasm. The catalysed reaction is guanosine(37) in tRNA + S-adenosyl-L-methionine = N(1)-methylguanosine(37) in tRNA + S-adenosyl-L-homocysteine + H(+). Specifically methylates guanosine-37 in various tRNAs. In Salinispora tropica (strain ATCC BAA-916 / DSM 44818 / JCM 13857 / NBRC 105044 / CNB-440), this protein is tRNA (guanine-N(1)-)-methyltransferase.